An 838-amino-acid chain; its full sequence is Periostin (838 aa).

The signal sequence occupies residues M1–A23. In terms of domain architecture, EMI spans G42–A96. 5 cysteine pairs are disulfide-bonded: C46–C82, C71–C335, C81–C94, C210–C313, and C469–C474. Position 62 is an S-cysteinyl cysteine (C62). FAS1 domains follow at residues P99–L232, G236–L367, D370–I494, and E498–L630. A glycan (N-linked (GlcNAc...) asparagine) is linked at N601. The disordered stretch occupies residues Q811–Q838. Over residues Q826–Q838 the composition is skewed to basic residues.

As to quaternary structure, homodimer. Interacts with BMP1 and fibronectin. Post-translationally, gamma-carboxylation is controversial. Gamma-carboxyglutamated; gamma-carboxyglutamate residues are formed by vitamin K dependent carboxylation; these residues may be required for binding to calcium. According to a more recent report in human, does not contain vitamin K-dependent gamma-carboxyglutamate residues. Preferentially expressed in periosteum and periodontal ligament. Also expressed in the developing and adult heart.

It localises to the golgi apparatus. The protein resides in the secreted. The protein localises to the extracellular space. Its subcellular location is the extracellular matrix. Functionally, induces cell attachment and spreading and plays a role in cell adhesion. Enhances incorporation of BMP1 in the fibronectin matrix of connective tissues, and subsequent proteolytic activation of lysyl oxidase LOX. The polypeptide is Periostin (Postn) (Mus musculus (Mouse)).